We begin with the raw amino-acid sequence, 194 residues long: Phosphoheptose isomerase (194 aa).

An SIS domain is found at 37 to 194 (ISNSFKQGGK…LIEFEMAKQA (158 aa)). 52-54 (NGG) contributes to the substrate binding site. Residues H61 and E65 each contribute to the Zn(2+) site. Substrate is bound by residues E65, 93 to 94 (ND), 119 to 121 (STS), S124, and Q172. 2 residues coordinate Zn(2+): Q172 and H180.

This sequence belongs to the SIS family. GmhA subfamily. In terms of assembly, homotetramer. The cofactor is Zn(2+).

It localises to the cytoplasm. It catalyses the reaction 2 D-sedoheptulose 7-phosphate = D-glycero-alpha-D-manno-heptose 7-phosphate + D-glycero-beta-D-manno-heptose 7-phosphate. The protein operates within carbohydrate biosynthesis; D-glycero-D-manno-heptose 7-phosphate biosynthesis; D-glycero-alpha-D-manno-heptose 7-phosphate and D-glycero-beta-D-manno-heptose 7-phosphate from sedoheptulose 7-phosphate: step 1/1. Functionally, catalyzes the isomerization of sedoheptulose 7-phosphate in D-glycero-D-manno-heptose 7-phosphate. This Haemophilus influenzae (strain PittEE) protein is Phosphoheptose isomerase.